Reading from the N-terminus, the 253-residue chain is Uracil-DNA glycosylase (253 aa).

Residue Asp79 is the Proton acceptor of the active site.

This sequence belongs to the uracil-DNA glycosylase (UDG) superfamily. UNG family.

It localises to the cytoplasm. The enzyme catalyses Hydrolyzes single-stranded DNA or mismatched double-stranded DNA and polynucleotides, releasing free uracil.. Excises uracil residues from the DNA which can arise as a result of misincorporation of dUMP residues by DNA polymerase or due to deamination of cytosine. The polypeptide is Uracil-DNA glycosylase (Xylella fastidiosa (strain M12)).